The primary structure comprises 252 residues: Uracil-DNA glycosylase (252 aa).

Asp78 serves as the catalytic Proton acceptor.

It belongs to the uracil-DNA glycosylase (UDG) superfamily. UNG family.

It is found in the cytoplasm. It catalyses the reaction Hydrolyzes single-stranded DNA or mismatched double-stranded DNA and polynucleotides, releasing free uracil.. Excises uracil residues from the DNA which can arise as a result of misincorporation of dUMP residues by DNA polymerase or due to deamination of cytosine. The polypeptide is Uracil-DNA glycosylase (Bordetella avium (strain 197N)).